Here is a 354-residue protein sequence, read N- to C-terminus: DNA polymerase IV (354 aa).

The UmuC domain occupies 6 to 187 (IIHVDCDCFY…LPVARLHGVG (182 aa)). Residues D10 and D105 each contribute to the Mg(2+) site. The active site involves E106.

It belongs to the DNA polymerase type-Y family. As to quaternary structure, monomer. The cofactor is Mg(2+).

It is found in the cytoplasm. It catalyses the reaction DNA(n) + a 2'-deoxyribonucleoside 5'-triphosphate = DNA(n+1) + diphosphate. In terms of biological role, poorly processive, error-prone DNA polymerase involved in untargeted mutagenesis. Copies undamaged DNA at stalled replication forks, which arise in vivo from mismatched or misaligned primer ends. These misaligned primers can be extended by PolIV. Exhibits no 3'-5' exonuclease (proofreading) activity. May be involved in translesional synthesis, in conjunction with the beta clamp from PolIII. The protein is DNA polymerase IV of Pseudomonas putida (strain GB-1).